A 503-amino-acid chain; its full sequence is Glutamate/gamma-aminobutyrate antiporter (503 aa).

33-43 (LHLVFFLLLGG) contributes to the L-glutamate binding site. 7 consecutive transmembrane segments (helical) span residues 35–55 (LVFF…LCAA), 153–173 (FVVG…AYFI), 194–214 (VSTL…EASA), 232–252 (ILLV…VAAV), 366–386 (LTVV…FVLI), 407–427 (IIAG…FVPP), and 440–460 (MILL…YELH).

It belongs to the amino acid-polyamine-organocation (APC) superfamily. Glutamate:GABA antiporter (GGA) (TC 2.A.3.7) family.

Its subcellular location is the cell membrane. The catalysed reaction is 4-aminobutanoate(in) + L-glutamate(out) = 4-aminobutanoate(out) + L-glutamate(in). In terms of biological role, involved in glutaminase-dependent acid resistance. Exchanges extracellular glutamate (Glu) for intracellular gamma-aminobutyric acid (GABA) under acidic conditions. The protein is Glutamate/gamma-aminobutyrate antiporter of Lactococcus lactis subsp. cremoris (strain MG1363).